Consider the following 731-residue polypeptide: Probable G-protein coupled receptor 149 (731 aa).

The Extracellular portion of the chain corresponds to 1–35 (MSLFLSNLSTNDSSLWKENHNSTDLLNPPGTLNIY). N-linked (GlcNAc...) asparagine glycans are attached at residues Asn-7, Asn-11, and Asn-21. The chain crosses the membrane as a helical span at residues 36 to 56 (LFCLTCLMTFAALVGSIYSLI). Topologically, residues 57–69 (SLLKMQNRTVVSM) are cytoplasmic. The helical transmembrane segment at 70–90 (LVASWSVDDLMSVLSVTIFMF) threads the bilayer. Over 91-109 (LQWPNEVPGYFQFLCTTSA) the chain is Extracellular. Cys-105 and Cys-182 are disulfide-bonded. Residues 110-132 (LMYLCQGLSSNLKATLLVSYNFY) traverse the membrane as a helical segment. At 133–155 (TMHRGVGSQTASRRSGQVLGVVL) the chain is on the cytoplasmic side. Residues 156–176 (TVWAASLLLSALPLCGWGAFV) traverse the membrane as a helical segment. The Extracellular portion of the chain corresponds to 177-189 (RTPWGCLVDCSSS). Residues 190-210 (YVLFLSIVYALAFGLLVGLSV) form a helical membrane-spanning segment. Topologically, residues 211–310 (PLTHRLLCSE…SFTVSVAQKR (100 aa)) are cytoplasmic. The segment at 234-271 (RGASIPGTPPTAGRVVSLSPEDAPGPSLRRSGGCSPSS) is disordered. The chain crosses the membrane as a helical span at residues 311–331 (FALILALTKVVLWLPMMMHMV). At 332 to 342 (VQNVVGFQSLP) the chain is on the extracellular side. The helical transmembrane segment at 343–363 (LETFSFLLTLLATTVTPVFVL) threads the bilayer. At 364-731 (SKRWTHLPCG…RKREEESKGS (368 aa)) the chain is on the cytoplasmic side. The disordered stretch occupies residues 475–526 (NTDITEAKQDSNNKKDAFSDKTGGDINYEETTFSEGPERRLSHEESQKPDLS). 2 stretches are compositionally biased toward basic and acidic residues: residues 479-497 (TEAKQDSNNKKDAFSDKTG) and 510-526 (GPERRLSHEESQKPDLS).

This sequence belongs to the G-protein coupled receptor 1 family.

The protein resides in the cell membrane. Functionally, orphan receptor. The chain is Probable G-protein coupled receptor 149 (GPR149) from Homo sapiens (Human).